The primary structure comprises 677 residues: Methionine--tRNA ligase (677 aa).

The short motif at proline 15–histidine 25 is the 'HIGH' region element. Zn(2+) is bound by residues cysteine 146, cysteine 149, cysteine 159, and cysteine 162. Residues lysine 333–serine 337 carry the 'KMSKS' region motif. ATP is bound at residue lysine 336. One can recognise a tRNA-binding domain in the interval aspartate 575–lysine 677.

The protein belongs to the class-I aminoacyl-tRNA synthetase family. MetG type 1 subfamily. In terms of assembly, homodimer. Requires Zn(2+) as cofactor.

The protein resides in the cytoplasm. It carries out the reaction tRNA(Met) + L-methionine + ATP = L-methionyl-tRNA(Met) + AMP + diphosphate. In terms of biological role, is required not only for elongation of protein synthesis but also for the initiation of all mRNA translation through initiator tRNA(fMet) aminoacylation. The protein is Methionine--tRNA ligase of Shigella sonnei (strain Ss046).